Consider the following 72-residue polypeptide: Translation initiation factor IF-1 (72 aa).

Positions 1–72 (MSKDDVIQMQ…SRARIVFRAK (72 aa)) constitute an S1-like domain.

It belongs to the IF-1 family. As to quaternary structure, component of the 30S ribosomal translation pre-initiation complex which assembles on the 30S ribosome in the order IF-2 and IF-3, IF-1 and N-formylmethionyl-tRNA(fMet); mRNA recruitment can occur at any time during PIC assembly.

The protein localises to the cytoplasm. In terms of biological role, one of the essential components for the initiation of protein synthesis. Stabilizes the binding of IF-2 and IF-3 on the 30S subunit to which N-formylmethionyl-tRNA(fMet) subsequently binds. Helps modulate mRNA selection, yielding the 30S pre-initiation complex (PIC). Upon addition of the 50S ribosomal subunit IF-1, IF-2 and IF-3 are released leaving the mature 70S translation initiation complex. This is Translation initiation factor IF-1 from Albidiferax ferrireducens (strain ATCC BAA-621 / DSM 15236 / T118) (Rhodoferax ferrireducens).